Consider the following 419-residue polypeptide: S-adenosylmethionine synthase (419 aa).

Residue H15 participates in ATP binding. Residue D17 coordinates Mg(2+). Residue E43 coordinates K(+). L-methionine is bound by residues E56 and Q100. A flexible loop region spans residues 100–110 (QSPDIAQGVDE). ATP-binding positions include 171-173 (DGK), 248-249 (KF), D257, 263-264 (RK), A280, and K284. D257 is an L-methionine binding site. K288 serves as a coordination point for L-methionine.

Belongs to the AdoMet synthase family. In terms of assembly, homotetramer; dimer of dimers. Mg(2+) serves as cofactor. It depends on K(+) as a cofactor.

It localises to the cytoplasm. It carries out the reaction L-methionine + ATP + H2O = S-adenosyl-L-methionine + phosphate + diphosphate. Its pathway is amino-acid biosynthesis; S-adenosyl-L-methionine biosynthesis; S-adenosyl-L-methionine from L-methionine: step 1/1. Catalyzes the formation of S-adenosylmethionine (AdoMet) from methionine and ATP. The overall synthetic reaction is composed of two sequential steps, AdoMet formation and the subsequent tripolyphosphate hydrolysis which occurs prior to release of AdoMet from the enzyme. The sequence is that of S-adenosylmethionine synthase from Parasynechococcus marenigrum (strain WH8102).